The chain runs to 174 residues: Large ribosomal subunit protein bL12cy (174 aa).

Residues 1–45 (MASTTFSSAFSILSLPSSSPSPPPWAPRTLPVANRRRRAAAVAST) constitute a chloroplast transit peptide.

This sequence belongs to the bacterial ribosomal protein bL12 family.

It is found in the plastid. The protein localises to the chloroplast. The chain is Large ribosomal subunit protein bL12cy (RPL12-2) from Secale cereale (Rye).